Consider the following 388-residue polypeptide: Diacylglycerol O-acyltransferase 2 (388 aa).

The Cytoplasmic portion of the chain corresponds to 1–69; it reads MKTLIAAYSG…NRSKVEKHLQ (69 aa). The helical transmembrane segment at 70–88 threads the bilayer; the sequence is VISVLQWVLSFLVLGVACS. Residues 89 to 92 are Lumenal-facing; sequence VILM. The chain crosses the membrane as a helical span at residues 93–112; that stretch reads YTFCTDCWLIAALYFTWLAF. At 113–388 the chain is on the cytoplasmic side; it reads DWNTPKKGGR…LPETEVLEVN (276 aa).

It belongs to the diacylglycerol acyltransferase family. Forms multimeric complexes consisting of several DGAT2 subunits. Interacts with SLC27A1 and this interaction is enhanced in the presence of ZFYVE1.

The protein resides in the endoplasmic reticulum membrane. The protein localises to the lipid droplet. It localises to the cytoplasm. Its subcellular location is the perinuclear region. The catalysed reaction is an acyl-CoA + a 1,2-diacyl-sn-glycerol = a triacyl-sn-glycerol + CoA. It catalyses the reaction all-trans-retinol + an acyl-CoA = an all-trans-retinyl ester + CoA. The enzyme catalyses 2-(9Z-octadecenoyl)-glycerol + (9Z)-octadecenoyl-CoA = 1,2-di-(9Z-octadecenoyl)-sn-glycerol + CoA. It carries out the reaction 1,2-di-(9Z-octadecenoyl)-sn-glycerol + (9Z)-octadecenoyl-CoA = 1,2,3-tri-(9Z-octadecenoyl)-glycerol + CoA. The catalysed reaction is all-trans-retinol + hexadecanoyl-CoA = all-trans-retinyl hexadecanoate + CoA. It catalyses the reaction 1-O-(9Z-octadecenyl)-glycerol + (9Z)-octadecenoyl-CoA = 1-O-(9Z-octadecyl)-3-(9Z-octadecenoyl)-glycerol + CoA. The enzyme catalyses 1-(9Z-octadecenoyl)-glycerol + (9Z)-octadecenoyl-CoA = 1,2-di-(9Z-octadecenoyl)-glycerol + CoA. It carries out the reaction 1,2-di-(9Z-octadecenoyl)-sn-glycerol + hexadecanoyl-CoA = 1,2-di-(9Z)-octadecenoyl-3-hexadecanoyl-sn-glycerol + CoA. The catalysed reaction is 1,3-di-(9Z-octadecenoyl)-glycerol + (9Z)-octadecenoyl-CoA = 1,2,3-tri-(9Z-octadecenoyl)-glycerol + CoA. It catalyses the reaction 2,3-di-(9Z)-octadecenoyl-sn-glycerol + (9Z)-octadecenoyl-CoA = 1,2,3-tri-(9Z-octadecenoyl)-glycerol + CoA. The enzyme catalyses 2-(9Z-octadecenoyl)-glycerol + hexadecanoyl-CoA = 1-hexadecanoyl-2-(9Z-octadecenoyl)-sn-glycerol + CoA. It participates in glycerolipid metabolism; triacylglycerol biosynthesis. Its activity is regulated as follows. Inhibited by niacin. Its function is as follows. Essential acyltransferase that catalyzes the terminal and only committed step in triacylglycerol synthesis by using diacylglycerol and fatty acyl CoA as substrates. Required for synthesis and storage of intracellular triglycerides. Probably plays a central role in cytosolic lipid accumulation. In liver, is primarily responsible for incorporating endogenously synthesized fatty acids into triglycerides. Also functions as an acyl-CoA retinol acyltransferase (ARAT). Also able to use 1-monoalkylglycerol (1-MAkG) as an acyl acceptor for the synthesis of monoalkyl-monoacylglycerol (MAMAG). In Rattus norvegicus (Rat), this protein is Diacylglycerol O-acyltransferase 2.